The following is a 418-amino-acid chain: Glutamyl-tRNA reductase (418 aa).

Residues 49–52 (TCNR), S109, 114–116 (EPQ), and Q120 each bind substrate. Residue C50 is the Nucleophile of the active site. 189 to 194 (GAGETI) is a binding site for NADP(+).

It belongs to the glutamyl-tRNA reductase family. Homodimer.

It catalyses the reaction (S)-4-amino-5-oxopentanoate + tRNA(Glu) + NADP(+) = L-glutamyl-tRNA(Glu) + NADPH + H(+). Its pathway is porphyrin-containing compound metabolism; protoporphyrin-IX biosynthesis; 5-aminolevulinate from L-glutamyl-tRNA(Glu): step 1/2. In terms of biological role, catalyzes the NADPH-dependent reduction of glutamyl-tRNA(Glu) to glutamate 1-semialdehyde (GSA). The protein is Glutamyl-tRNA reductase of Salmonella choleraesuis (strain SC-B67).